Here is a 402-residue protein sequence, read N- to C-terminus: MKLEKLPEEFVQAQPVLEKISEHGFEAYFVGGSVRDVLLGREIHDVDIATSAYPEEIKDIFPYTIDVGIEHGTVLVLAGKSEAEHYEITTFRTESKYTDYRRPDHVDFVRDLREDLKRRDFTVNAFACDFEGQIIDLFDGLTDLKERRLTAVGSALERFNEDALRIMRAMRFASTLDFKIEEKTFSAMRERSHLLEKISVERIFIELDKLLLGSEWRNGLTLLIESEAWKYLPDFQDLALKKVLTELSVDFHFKNSEQAWAALLTRFSNIDVKAFLRKWKVSNEFSKYVADLVSAYELENWDLVSLYHFGLEKALLVDELKIAFGRDIDRERAVFINDQLQIHDKSEIVIAGKDLMDEFSLKPGPELGKILKTIEEKIVKNELKNEQIAILTEVKKMLELEK.

Positions 32 and 35 each coordinate ATP. Residues glycine 32 and arginine 35 each contribute to the CTP site. The Mg(2+) site is built by aspartate 45 and aspartate 47. ATP contacts are provided by arginine 119, aspartate 162, arginine 165, arginine 168, and arginine 171. Arginine 119, aspartate 162, arginine 165, arginine 168, and arginine 171 together coordinate CTP.

It belongs to the tRNA nucleotidyltransferase/poly(A) polymerase family. Bacterial CCA-adding enzyme type 3 subfamily. Homodimer. The cofactor is Mg(2+).

It catalyses the reaction a tRNA precursor + 2 CTP + ATP = a tRNA with a 3' CCA end + 3 diphosphate. The catalysed reaction is a tRNA with a 3' CCA end + 2 CTP + ATP = a tRNA with a 3' CCACCA end + 3 diphosphate. Functionally, catalyzes the addition and repair of the essential 3'-terminal CCA sequence in tRNAs without using a nucleic acid template. Adds these three nucleotides in the order of C, C, and A to the tRNA nucleotide-73, using CTP and ATP as substrates and producing inorganic pyrophosphate. tRNA 3'-terminal CCA addition is required both for tRNA processing and repair. Also involved in tRNA surveillance by mediating tandem CCA addition to generate a CCACCA at the 3' terminus of unstable tRNAs. While stable tRNAs receive only 3'-terminal CCA, unstable tRNAs are marked with CCACCA and rapidly degraded. The polypeptide is CCA-adding enzyme (Lactococcus lactis subsp. cremoris (strain MG1363)).